Here is a 529-residue protein sequence, read N- to C-terminus: Meiosis 1 arrest protein (529 aa).

Disordered stretches follow at residues 180–201 (KGIQ…DESS) and 504–529 (AASK…PSHT). The segment covering 188-200 (SPSPTEEPSNDES) has biased composition (polar residues). A Phosphoserine modification is found at S516.

In terms of tissue distribution, expressed in germ cells of the testis. Expressed from spermatogonia to spermatids. Expressed at very low levels in lung, stomach, thymus. Not detected in Sertoli cells.

It localises to the cytoplasm. Functionally, required for meiosis I progression during spermatogenesis. This Mus musculus (Mouse) protein is Meiosis 1 arrest protein (M1ap).